Here is a 273-residue protein sequence, read N- to C-terminus: Formamidopyrimidine-DNA glycosylase (273 aa).

Proline 2 (schiff-base intermediate with DNA) is an active-site residue. Glutamate 3 functions as the Proton donor in the catalytic mechanism. Lysine 57 serves as the catalytic Proton donor; for beta-elimination activity. The DNA site is built by histidine 91, arginine 110, and lysine 151. The segment at glutamine 236–isoleucine 270 adopts an FPG-type zinc-finger fold. Arginine 260 serves as the catalytic Proton donor; for delta-elimination activity.

It belongs to the FPG family. As to quaternary structure, monomer. Zn(2+) serves as cofactor.

The enzyme catalyses Hydrolysis of DNA containing ring-opened 7-methylguanine residues, releasing 2,6-diamino-4-hydroxy-5-(N-methyl)formamidopyrimidine.. The catalysed reaction is 2'-deoxyribonucleotide-(2'-deoxyribose 5'-phosphate)-2'-deoxyribonucleotide-DNA = a 3'-end 2'-deoxyribonucleotide-(2,3-dehydro-2,3-deoxyribose 5'-phosphate)-DNA + a 5'-end 5'-phospho-2'-deoxyribonucleoside-DNA + H(+). Involved in base excision repair of DNA damaged by oxidation or by mutagenic agents. Acts as a DNA glycosylase that recognizes and removes damaged bases. Has a preference for oxidized purines, such as 7,8-dihydro-8-oxoguanine (8-oxoG). Has AP (apurinic/apyrimidinic) lyase activity and introduces nicks in the DNA strand. Cleaves the DNA backbone by beta-delta elimination to generate a single-strand break at the site of the removed base with both 3'- and 5'-phosphates. This chain is Formamidopyrimidine-DNA glycosylase, found in Actinobacillus pleuropneumoniae serotype 7 (strain AP76).